The chain runs to 349 residues: Peroxidase 7 (349 aa).

An N-terminal signal peptide occupies residues 1–22; sequence MKLAVVSVVVILGVLVAWPVSA. 4 disulfide bridges follow: Cys60–Cys136, Cys93–Cys98, Cys142–Cys341, and Cys220–Cys252. Catalysis depends on His91, which acts as the Proton acceptor. Residues Asp92, Val95, Gly97, Asp99, and Ser101 each coordinate Ca(2+). Substrate is bound at residue Pro183. A heme b-binding site is contributed by His213. Thr214 contacts Ca(2+). The N-linked (GlcNAc...) asparagine glycan is linked to Asn231. Positions 262, 265, and 270 each coordinate Ca(2+).

The protein belongs to the peroxidase family. Classical plant (class III) peroxidase subfamily. The cofactor is heme b. Requires Ca(2+) as cofactor.

It is found in the secreted. It catalyses the reaction 2 a phenolic donor + H2O2 = 2 a phenolic radical donor + 2 H2O. In terms of biological role, removal of H(2)O(2), oxidation of toxic reductants, biosynthesis and degradation of lignin, suberization, auxin catabolism, response to environmental stresses such as wounding, pathogen attack and oxidative stress. These functions might be dependent on each isozyme/isoform in each plant tissue. The protein is Peroxidase 7 (PER7) of Arabidopsis thaliana (Mouse-ear cress).